The primary structure comprises 509 residues: 2,3-bisphosphoglycerate-independent phosphoglycerate mutase (509 aa).

Residue Asp11 participates in Mn(2+) binding. The residue at position 35 (Tyr35) is a Phosphotyrosine. Ser61 is a binding site for Mn(2+). The Phosphoserine intermediate role is filled by Ser61. Substrate-binding positions include His122, 152–153 (RD), Arg184, Arg190, 260–263 (RPDR), and Lys335. 5 residues coordinate Mn(2+): Asp402, His406, Asp443, His444, and His461.

This sequence belongs to the BPG-independent phosphoglycerate mutase family. As to quaternary structure, monomer. Mn(2+) serves as cofactor.

It catalyses the reaction (2R)-2-phosphoglycerate = (2R)-3-phosphoglycerate. It participates in carbohydrate degradation; glycolysis; pyruvate from D-glyceraldehyde 3-phosphate: step 3/5. Its function is as follows. Essential for rapid growth and for sporulation. Catalyzes the interconversion of 2-phosphoglycerate and 3-phosphoglycerate. This Bacillus thuringiensis (strain Al Hakam) protein is 2,3-bisphosphoglycerate-independent phosphoglycerate mutase.